A 327-amino-acid chain; its full sequence is Small ribosomal subunit protein RACK1z (327 aa).

WD repeat units lie at residues A13 to K44, G61 to D91, G103 to N133, G148 to N180, G192 to D222, E233 to D262, and R293 to G323.

It belongs to the WD repeat G protein beta family. Ribosomal protein RACK1 subfamily. As to quaternary structure, homodimer and heterodimer with RACK1B or RACK1C. Interacts with NUDT7. Interacts with GB1, MEKK1, MKK4, MKK5, MPK3 and MPK6, but not with GPA1 or MPK4. Interacts with OFUT20. As to expression, widely expressed.

Its subcellular location is the cytoplasm. The protein resides in the nucleus. Its function is as follows. Major component of the RACK1 regulatory proteins that play a role in multiple signal transduction pathways. Involved in multiple hormone responses and developmental processes. MAPK cascade scaffolding protein involved in the protease IV and ArgC signaling pathway but not the flg22 pathway. This Arabidopsis thaliana (Mouse-ear cress) protein is Small ribosomal subunit protein RACK1z.